We begin with the raw amino-acid sequence, 107 residues long: MNKIIKGDRVVVIAGKDKGKQGQVVRVLGGKVVVEGVNVVKRHQKPNPMRGIKGGIITKEMPLDISNIAILNPETNKADRVGIKLIENEGKVKRVRFFKSNGSIIGA.

It belongs to the universal ribosomal protein uL24 family. As to quaternary structure, part of the 50S ribosomal subunit.

In terms of biological role, one of two assembly initiator proteins, it binds directly to the 5'-end of the 23S rRNA, where it nucleates assembly of the 50S subunit. One of the proteins that surrounds the polypeptide exit tunnel on the outside of the subunit. The chain is Large ribosomal subunit protein uL24 from Neisseria gonorrhoeae (strain ATCC 700825 / FA 1090).